Reading from the N-terminus, the 620-residue chain is Chaperone protein HscA homolog (620 aa).

The protein belongs to the heat shock protein 70 family.

Its function is as follows. Chaperone involved in the maturation of iron-sulfur cluster-containing proteins. Has a low intrinsic ATPase activity which is markedly stimulated by HscB. The polypeptide is Chaperone protein HscA homolog (Shewanella loihica (strain ATCC BAA-1088 / PV-4)).